Consider the following 37-residue polypeptide: Large ribosomal subunit protein bL36 (37 aa).

Belongs to the bacterial ribosomal protein bL36 family.

In Dechloromonas aromatica (strain RCB), this protein is Large ribosomal subunit protein bL36.